Consider the following 459-residue polypeptide: UDP-N-acetylmuramoylalanine--D-glutamate ligase (459 aa).

G119–T125 is a binding site for ATP.

This sequence belongs to the MurCDEF family.

The protein localises to the cytoplasm. It catalyses the reaction UDP-N-acetyl-alpha-D-muramoyl-L-alanine + D-glutamate + ATP = UDP-N-acetyl-alpha-D-muramoyl-L-alanyl-D-glutamate + ADP + phosphate + H(+). It participates in cell wall biogenesis; peptidoglycan biosynthesis. Its function is as follows. Cell wall formation. Catalyzes the addition of glutamate to the nucleotide precursor UDP-N-acetylmuramoyl-L-alanine (UMA). In Lactiplantibacillus plantarum (strain ATCC BAA-793 / NCIMB 8826 / WCFS1) (Lactobacillus plantarum), this protein is UDP-N-acetylmuramoylalanine--D-glutamate ligase.